Reading from the N-terminus, the 735-residue chain is Transcription initiation factor IIF subunit alpha (735 aa).

Disordered stretches follow at residues 1 to 68 (MSRR…EYAE), 165 to 263 (EYKK…TANL), 297 to 323 (NEPE…AKRG), 446 to 465 (KAVA…NSEV), 471 to 606 (EEFA…HKEP), and 631 to 674 (PEGE…EETP). Positions 33–54 (RMRMGQNGSNSSSPGVPNGDNS) are enriched in low complexity. Composition is skewed to basic and acidic residues over residues 59-68 (VKKDDPEYAE) and 165-174 (EYKKKAEQER). Residues 175 to 219 (STPNSGGMNKSGTVSLNNTVKDGSQTPTVDSVTKDNTANGVNSSI) are compositionally biased toward polar residues. At serine 198 the chain carries Phosphoserine. Threonine 200 carries the post-translational modification Phosphothreonine. The segment covering 220 to 238 (PTVTGSSVPPASPTTVSAV) has biased composition (low complexity). Positions 239-263 (ESNGLSNGSTSAANGLDGNASTANL) are enriched in polar residues. Composition is skewed to acidic residues over residues 453-465 (AMDE…NSEV) and 471-480 (EEFADDEEAP). The span at 487-500 (QENKESEQRIKKEM) shows a compositional bias: basic and acidic residues. The span at 513–522 (APSENEEDEL) shows a compositional bias: acidic residues. Serine 515 bears the Phosphoserine mark. A compositionally biased stretch (basic and acidic residues) spans 523 to 536 (FGEKKIDEDGERIK). Phosphoserine occurs at positions 560, 562, and 571. A compositionally biased stretch (basic and acidic residues) spans 564 to 583 (IENKENESPVKKEEDSDTLS). The span at 584–595 (KSKRSSPKKQQK) shows a compositional bias: basic residues. Residues 636 to 654 (NPQTTKAVDSSNNASNTVP) show a composition bias toward polar residues. Position 655 is a phosphoserine (serine 655).

This sequence belongs to the TFIIF alpha subunit family. In terms of assembly, TFIIF is composed of three different subunits: TFG1/RAP74, TFG2/RAP30 and TAF14. In terms of processing, phosphorylated on Ser and other residues by TAF1 and casein kinase II-like kinases.

The protein localises to the nucleus. Its function is as follows. TFIIF is a general transcription initiation factor that binds to RNA polymerase II. Its functions include the recruitment of RNA polymerase II to the promoter bound DNA-TBP-TFIIB complex, decreasing the affinity of RNA polymerase II for non-specific DNA, allowing for the subsequent recruitment of TFIIE and TFIIH, and facilitating RNA polymerase II elongation. The chain is Transcription initiation factor IIF subunit alpha (TFG1) from Saccharomyces cerevisiae (strain ATCC 204508 / S288c) (Baker's yeast).